Here is a 381-residue protein sequence, read N- to C-terminus: Guanine nucleotide-binding protein G(olf) subunit alpha (381 aa).

The interval 1–25 (MGCLGNSSKTAEDQGVDEKERREAN) is disordered. A lipid anchor (N-palmitoyl glycine) is attached at Gly-2. A lipid anchor (S-palmitoyl cysteine) is attached at Cys-3. Residues 10–25 (TAEDQGVDEKERREAN) show a composition bias toward basic and acidic residues. The G-alpha domain occupies 41–381 (ATHRLLLLGA…RMHLKQYELL (341 aa)). The G1 motif stretch occupies residues 44–57 (RLLLLGAGESGKST). Residues Glu-52, Ser-53, Gly-54, Lys-55, Ser-56, and Thr-57 each contribute to the GTP site. Mg(2+) is bound at residue Ser-56. A Phosphothreonine modification is found at Thr-178. The tract at residues 183-191 (DLLRCRVLT) is G2 motif. GTP-binding residues include Leu-185, Arg-186, and Thr-191. The Mg(2+) site is built by Thr-191 and Asp-210. Positions 206-215 (FHMFDVGGQR) are G3 motif. 5 residues coordinate GTP: Gly-213, Asn-279, Lys-280, Asp-282, and Ala-353. Residues 275–282 (ILFLNKQD) form a G4 motif region. The G5 motif stretch occupies residues 351 to 356 (TCAVDT).

This sequence belongs to the G-alpha family. G(s) subfamily. In terms of assembly, g proteins are composed of 3 units; alpha, beta and gamma. The alpha chain contains the guanine nucleotide binding site. Interacts with GAS2L2. Interacts (GDP-bound form) with RIC8B (via C-terminus); promoting GNAL folding and association with the plasma membrane.

The protein resides in the cell membrane. It catalyses the reaction GTP + H2O = GDP + phosphate + H(+). Guanine nucleotide-binding protein (G protein) involved as transducer in olfactory signal transduction controlled by G protein-coupled receptors (GPCRs). Contains the guanine nucleotide binding site and alternates between an active, GTP-bound state and an inactive, GDP-bound state. Signaling by an activated GPCR promotes GDP release and GTP binding. The alpha subunit has a low GTPase activity that converts bound GTP to GDP, thereby terminating the signal. Both GDP release and GTP hydrolysis are modulated by numerous regulatory proteins. GNAL/G(olf) alpha specifically mediates olfactory signal transduction within the olfactory neuroepithelium and the basal ganglia following GPCRs activation. Acts by promoting the specific activation of adenylyl cyclase ADCY3, resulting in increased levels of the signaling molecule cAMP. In Mus musculus (Mouse), this protein is Guanine nucleotide-binding protein G(olf) subunit alpha.